The following is a 51-amino-acid chain: Sperm protamine P1 (51 aa).

It belongs to the protamine P1 family. Testis.

The protein localises to the nucleus. The protein resides in the chromosome. Protamines substitute for histones in the chromatin of sperm during the haploid phase of spermatogenesis. They compact sperm DNA into a highly condensed, stable and inactive complex. This is Sperm protamine P1 (PRM1) from Piliocolobus badius (Western red colobus).